We begin with the raw amino-acid sequence, 103 residues long: Large ribosomal subunit protein bL21 (103 aa).

Belongs to the bacterial ribosomal protein bL21 family. As to quaternary structure, part of the 50S ribosomal subunit. Contacts protein L20.

In terms of biological role, this protein binds to 23S rRNA in the presence of protein L20. In Aeromonas hydrophila subsp. hydrophila (strain ATCC 7966 / DSM 30187 / BCRC 13018 / CCUG 14551 / JCM 1027 / KCTC 2358 / NCIMB 9240 / NCTC 8049), this protein is Large ribosomal subunit protein bL21.